A 23-amino-acid chain; its full sequence is Phallacidin proprotein 1 (23 aa).

Residue Pro-1 is a propeptide. Residues Ala-2–Pro-8 constitute a cross-link (cyclopeptide (Ala-Pro)). Positions Trp-3 to Cys-7 form a cross-link, 2'-cysteinyl-6'-hydroxytryptophan sulfoxide (Trp-Cys). Positions Cys-9–Arg-23 are excised as a propeptide.

It belongs to the MSDIN fungal toxin family. Post-translationally, processed by the macrocyclase-peptidase enzyme POPB to yield a toxic cyclic heptapeptide. POPB first removes 10 residues from the N-terminus. Conformational trapping of the remaining peptide forces the enzyme to release this intermediate rather than proceed to macrocyclization. The enzyme rebinds the remaining peptide in a different conformation and catalyzes macrocyclization of the N-terminal 7 residues.

Toxin that belongs to the bicyclic heptapeptides called phallotoxins. Although structurally related to amatoxins, phallotoxins have a different mode of action, which is the stabilization of F-actin. Phallotoxins are poisonous when administered parenterally, but not orally because of poor absorption. The polypeptide is Phallacidin proprotein 1 (Amanita exitialis (Guangzhou destroying angel)).